A 72-amino-acid chain; its full sequence is uncharacterized protein (72 aa).

This is an uncharacterized protein from Vaccinia virus (strain Copenhagen) (VACV).